A 116-amino-acid polypeptide reads, in one-letter code: MHEITLCQRALELIEQQAAKHGAKRVTGVWLKIGAFSCVETSSLAFCFDLVCRGSVAEGCKLHLEEQEAECWCETCQQYVTLLTQRVRRCPQCHGDMLQIVADDGLQIRRIEIDQE.

Histidine 2 contacts Ni(2+). Residues cysteine 73, cysteine 76, cysteine 90, and cysteine 93 each contribute to the Zn(2+) site.

It belongs to the HypA/HybF family.

Involved in the maturation of [NiFe] hydrogenases. Required for nickel insertion into the metal center of the hydrogenase. In Escherichia coli O157:H7, this protein is Hydrogenase maturation factor HypA.